A 420-amino-acid chain; its full sequence is UDP-N-acetylglucosamine 1-carboxyvinyltransferase (420 aa).

Residue 22 to 23 (KN) coordinates phosphoenolpyruvate. Arg-95 contacts UDP-N-acetyl-alpha-D-glucosamine. The Proton donor role is filled by Cys-119. Cys-119 carries the 2-(S-cysteinyl)pyruvic acid O-phosphothioketal modification. UDP-N-acetyl-alpha-D-glucosamine contacts are provided by residues 124–128 (RPIDQ), Asp-307, and Ile-329.

It belongs to the EPSP synthase family. MurA subfamily.

The protein localises to the cytoplasm. It carries out the reaction phosphoenolpyruvate + UDP-N-acetyl-alpha-D-glucosamine = UDP-N-acetyl-3-O-(1-carboxyvinyl)-alpha-D-glucosamine + phosphate. It functions in the pathway cell wall biogenesis; peptidoglycan biosynthesis. Cell wall formation. Adds enolpyruvyl to UDP-N-acetylglucosamine. This is UDP-N-acetylglucosamine 1-carboxyvinyltransferase from Myxococcus xanthus (strain DK1622).